Consider the following 320-residue polypeptide: ATP-dependent 6-phosphofructokinase (320 aa).

G12 serves as a coordination point for ATP. ADP is bound by residues 22-26 and 55-60; these read RGVVR and RYSVSD. ATP is bound by residues 73–74 and 103–106; these read RF and GDGS. D104 contributes to the Mg(2+) binding site. 126–128 lines the substrate pocket; that stretch reads TID. D128 (proton acceptor) is an active-site residue. R155 serves as a coordination point for ADP. Substrate-binding positions include R163 and 170 to 172; that span reads MGR. Residues 186–188, K212, and 214–216 each bind ADP; these read GCE and KKH. Residues E223, R244, and 250-253 contribute to the substrate site; that span reads HIQR.

This sequence belongs to the phosphofructokinase type A (PFKA) family. ATP-dependent PFK group I subfamily. Prokaryotic clade 'B1' sub-subfamily. In terms of assembly, homotetramer. Mg(2+) serves as cofactor.

It localises to the cytoplasm. The catalysed reaction is beta-D-fructose 6-phosphate + ATP = beta-D-fructose 1,6-bisphosphate + ADP + H(+). The protein operates within carbohydrate degradation; glycolysis; D-glyceraldehyde 3-phosphate and glycerone phosphate from D-glucose: step 3/4. Its activity is regulated as follows. Allosterically activated by ADP and other diphosphonucleosides, and allosterically inhibited by phosphoenolpyruvate. Its function is as follows. Catalyzes the phosphorylation of D-fructose 6-phosphate to fructose 1,6-bisphosphate by ATP, the first committing step of glycolysis. In Salmonella agona (strain SL483), this protein is ATP-dependent 6-phosphofructokinase.